A 434-amino-acid polypeptide reads, in one-letter code: Trigger factor (434 aa).

The 86-residue stretch at D160 to P245 folds into the PPIase FKBP-type domain.

Belongs to the FKBP-type PPIase family. Tig subfamily.

It localises to the cytoplasm. The enzyme catalyses [protein]-peptidylproline (omega=180) = [protein]-peptidylproline (omega=0). Functionally, involved in protein export. Acts as a chaperone by maintaining the newly synthesized protein in an open conformation. Functions as a peptidyl-prolyl cis-trans isomerase. The chain is Trigger factor from Shewanella frigidimarina (strain NCIMB 400).